The following is a 154-amino-acid chain: MVLSDAEWHLVLNIWAKVEADVAGHGQDILIRLFKGHPETLEKFDKFKHLKTEAEMKASEDLKKHGNTVLTALGGILKKKGHHEAELKPLAQSHATKHKIPIKYLEFISDAIIHVLHSRHPAEFGADAQAAMNKALELFRKDIAAKYKELGFQG.

In terms of domain architecture, Globin spans 2 to 148; sequence VLSDAEWHLV…FRKDIAAKYK (147 aa). Residue serine 4 is modified to Phosphoserine. Residue histidine 65 coordinates nitrite. Histidine 65 provides a ligand contact to O2. Threonine 68 is modified (phosphothreonine). Position 94 (histidine 94) interacts with heme b.

The protein belongs to the globin family. Monomeric.

Its subcellular location is the cytoplasm. The protein localises to the sarcoplasm. The catalysed reaction is Fe(III)-heme b-[protein] + nitric oxide + H2O = Fe(II)-heme b-[protein] + nitrite + 2 H(+). It carries out the reaction H2O2 + AH2 = A + 2 H2O. In terms of biological role, monomeric heme protein which primary function is to store oxygen and facilitate its diffusion within muscle tissues. Reversibly binds oxygen through a pentacoordinated heme iron and enables its timely and efficient release as needed during periods of heightened demand. Depending on the oxidative conditions of tissues and cells, and in addition to its ability to bind oxygen, it also has a nitrite reductase activity whereby it regulates the production of bioactive nitric oxide. Under stress conditions, like hypoxia and anoxia, it also protects cells against reactive oxygen species thanks to its pseudoperoxidase activity. The protein is Myoglobin (MB) of Balaenoptera acutorostrata (Common minke whale).